Reading from the N-terminus, the 411-residue chain is Stearoyl-[acyl-carrier-protein] 9-desaturase 2, chloroplastic (411 aa).

The N-terminal 44 residues, 1–44, are a transit peptide targeting the chloroplast; sequence MALLLNSTITVAMKQNPLVAVSFPRTTCLGSSFSPPRLLRVSCV. Residues Glu-148, Glu-186, His-189, Glu-239, Glu-272, and His-275 each coordinate Fe cation.

This sequence belongs to the fatty acid desaturase type 2 family. As to quaternary structure, homodimer. Requires Fe(2+) as cofactor. Preferentially expressed in roots and flowers.

The protein localises to the plastid. The protein resides in the chloroplast. It carries out the reaction octadecanoyl-[ACP] + 2 reduced [2Fe-2S]-[ferredoxin] + O2 + 2 H(+) = (9Z)-octadecenoyl-[ACP] + 2 oxidized [2Fe-2S]-[ferredoxin] + 2 H2O. It functions in the pathway lipid metabolism; fatty acid metabolism. In terms of biological role, converts stearoyl-ACP to oleoyl-ACP by introduction of a cis double bond between carbons 9 and 10 of the acyl chain. Exhibits delta-9 palmitoyl-[acyl-carrier-protein] desaturase (PAD) activity. Involved in omega-7 monounsaturated fatty acid biosynthesis, especially in the endosperm oil. In Arabidopsis thaliana (Mouse-ear cress), this protein is Stearoyl-[acyl-carrier-protein] 9-desaturase 2, chloroplastic (S-ACP-DES2).